A 215-amino-acid chain; its full sequence is Nuclear autoantigen Sp-100 (215 aa).

An SAND domain is found at 1–31 (EGDRGASKNWKLSIRCGGYTLKVLTENKFLP). 2 DNA-binding regions (HMG box) span residues 32–108 (EPPS…KTYI) and 124–192 (PKRP…AACR). The short motif at 72-89 (KKRSEMWKTIFAKEKGKF) is the Nuclear localization signal element. Disordered stretches follow at residues 104–124 (MKTYIPPKGEKKKKFKDPNAP) and 193–215 (AKGKPNSATKRVVKAEKSKKKKE).

In terms of assembly, homodimer. Interacts with members of the HP1 family of nonhistone chromosomal protein, such as CBX5 and CBX3 via the PxVxL motif. Interacts with ETS1; the interaction is direct and modulates ETS1 transcriptional activity. Interacts with the MRN complex which is composed of two heterodimers RAD50/MRE11 associated with a single NBN; recruits the complex to PML-related bodies. Interacts with HIPK2; positively regulates TP53-dependent transcription. Interacts with CASP8AP2; may negatively regulate CASP8AP2 export from the nucleus to the cytoplasm. Phosphorylated. Post-translationally, sumoylated. Sumoylated with SUMO1. Sumoylation depends on a functional nuclear localization signal but is not necessary for nuclear import or nuclear body targeting. Sumoylation may stabilize the interaction with CBX5.

The protein resides in the nucleus. Its subcellular location is the PML body. It is found in the nuclear body. It localises to the cytoplasm. In terms of biological role, together with PML, this tumor suppressor is a major constituent of the PML bodies, a subnuclear organelle involved in a large number of physiological processes including cell growth, differentiation and apoptosis. Functions as a transcriptional coactivator of ETS1 and ETS2. Under certain conditions, it may also act as a corepressor of ETS1 preventing its binding to DNA. Through the regulation of ETS1 it may play a role in angiogenesis, controlling endothelial cell motility and invasion. Through interaction with the MRN complex it may be involved in the regulation of telomeres lengthening. May also regulate TP53-mediated transcription and through CASP8AP2, regulate FAS-mediated apoptosis. May also play a role in infection by viruses through mechanisms that may involve chromatin and/or transcriptional regulation. The polypeptide is Nuclear autoantigen Sp-100 (SP100) (Pan troglodytes (Chimpanzee)).